An 80-amino-acid chain; its full sequence is Cytochrome c oxidase subunit 7A1, mitochondrial (80 aa).

The N-terminal 21 residues, 1-21, are a transit peptide targeting the mitochondrion; the sequence is MRALRVSQALVRSFSSTARNR. Over 22–46 the chain is Mitochondrial matrix; the sequence is LENRVAEKQKIFQADNDLPVHLKGG. The helical transmembrane segment at 47-75 threads the bilayer; that stretch reads ATDNILYRVTMTLCLGGTVYSLYCLGWAS. The Mitochondrial intermembrane segment spans residues 76–80; sequence FPHKK.

It belongs to the cytochrome c oxidase VIIa family. In terms of assembly, component of the complex IV (CIV, cytochrome c oxidase), a multisubunit enzyme composed of 14 subunits. The complex is composed of a catalytic core of 3 subunits MT-CO1, MT-CO2 and MT-CO3, encoded in the mitochondrial DNA, and 11 supernumerary subunits COX4I1 (or COX4I2), COX5A, COX5B, COX6A2 (or COX6A1), COX6B1 (or COX6B2), COX6C, COX7A1 (or COX7A2), COX7B, COX7C, COX8B and NDUFA4, which are encoded in the nuclear genome. The complex exists as a monomer or a dimer and forms supercomplexes (SCs) in the inner mitochondrial membrane with NADH-ubiquinone oxidoreductase (complex I, CI) and ubiquinol-cytochrome c oxidoreductase (cytochrome b-c1 complex, complex III, CIII), resulting in different assemblies (supercomplex SCI(1)III(2)IV(1) and megacomplex MCI(2)III(2)IV(2)).

The protein resides in the mitochondrion inner membrane. It functions in the pathway energy metabolism; oxidative phosphorylation. In terms of biological role, component of the mitochondrial respiratory complex IV (CIV, also named cytochrome c oxidase complex), the last enzyme in the mitochondrial electron transport chain which drives oxidative phosphorylation. The CIV complex is the component of the respiratory chain that catalyzes the reduction of oxygen to water. Acts as an assembly factor that specifically drives the homodimerization of CIV complexes, mediating the formation of mitochondrial respiratory supercomplexes (respirasomes) containing two CIV: supercomplxes with two molecules of CIV show improved activity. Despite being highly expressed in brown adipose tissue, not required for thermogenesis. This Sus scrofa (Pig) protein is Cytochrome c oxidase subunit 7A1, mitochondrial (COX7A1).